The primary structure comprises 879 residues: MNEQYSAMRSNVSMLGKLLGDTIKEALGENILDKVETIRKLSKSSRAGNEKHRQELLTTLQNLSNDELLPVARAFSQFLNLTNTAEQYHTISPHGEAASNPAQLSSAFERLKESKDLTERDIRDAVESLSIELVLTAHPTEITRRTLIHKLVEVNTCLKQLDHNDLADYERNQIMRRLRQLIAQSWHTDEIRKIRPTPVDEAKWGFAVVENSLWEGVPAFLRELDEQLEQAFGYRLPVDAVPVRFTSWMGGDRDGNPNVTAEVTRHVLLLSRWKAADLFLRDIQVLVSELSMSECTPELLELAGGSEVQEPYRAIMKSLRSQLSSTLSYLEARLTGEERLPPKDLLITNEQLWEPLHACYQSLKSCGMGIIADGRLLDTLRRVRCFGVPLVRIDVRQESTRHTEALAEITRYLGLGDYESWSESDKQAFLIRELSSKRPLLPRYWEPSADTKEVLDTCRVIAKAPQGSIAAYVISMARTPSDVLAVHLLLKEAGCSFALPVAPLFETLDDLNNADDVMTQLLSIDWYRGFIQGKQMVMIGYSDSAKDAGVMAASWAQYRAQDALIKTCEKAGIALTLFHGRGGSIGRGGAPAHAALLSQPPGSLKGGLRVTEQGEMIRFKYGLPEVTISSLALYTGAILEANLLPPPEPKQEWHEVMDELSRVSCDMYRGYVRENPDFVPYFRAATPELELGKLPLGSRPAKRRPNGGVESLRAIPWIFAWTQNRLMLPAWLGAGAALQKVVDDGKQEQLEEMCRDWPFFSTRIGMLEMVFAKADLWLAEYYDQRLVDEKLWPLGKQLRDQLAADINIVLAISNDDHLMADLPWIAESIALRNVYTDPLNVLQAELLHRSRQQEKPDADLELALMVTIAGVAAGMRNTG.

Residues histidine 138 and lysine 546 contribute to the active site.

Belongs to the PEPCase type 1 family. It depends on Mg(2+) as a cofactor.

The catalysed reaction is oxaloacetate + phosphate = phosphoenolpyruvate + hydrogencarbonate. Functionally, forms oxaloacetate, a four-carbon dicarboxylic acid source for the tricarboxylic acid cycle. The protein is Phosphoenolpyruvate carboxylase of Pectobacterium carotovorum subsp. carotovorum (strain PC1).